The sequence spans 703 residues: Histone-lysine N-methyltransferase SETDB2 (703 aa).

An MBD domain is found at 178–248 (FTKGNPLQLP…DNFSFNNHVR (71 aa)). A Pre-SET domain is found at 310–384 (KCCNCTDGCL…LCQNRVVQHG (75 aa)). Residues Cys-312, Cys-314, Cys-318, Cys-324, Cys-326, Cys-365, Cys-369, Cys-371, and Cys-376 each coordinate Zn(2+). In terms of domain architecture, SET spans 387 to 678 (LRLQVFKTNT…AGTELTWDYS (292 aa)). An S-adenosyl-L-methionine-binding site is contributed by 397–399 (KGW). The disordered stretch occupies residues 492-588 (TFSPRQARSG…SSSVISGGHP (97 aa)). Residues 511–525 (RRPKTKTSMLQKRRR) show a composition bias toward basic residues. A compositionally biased stretch (polar residues) spans 550–560 (PEQKSSAGTKI). A compositionally biased stretch (low complexity) spans 571 to 586 (SGYVSEESSSSVISGG). Residues Arg-632 and 635-636 (NH) contribute to the S-adenosyl-L-methionine site. Positions 638, 691, 693, and 698 each coordinate Zn(2+).

It belongs to the class V-like SAM-binding methyltransferase superfamily.

It is found in the nucleus. It localises to the chromosome. The catalysed reaction is N(6),N(6)-dimethyl-L-lysyl(9)-[histone H3] + S-adenosyl-L-methionine = N(6),N(6),N(6)-trimethyl-L-lysyl(9)-[histone H3] + S-adenosyl-L-homocysteine + H(+). Its function is as follows. Histone methyltransferase involved in left-right axis specification in early development and mitosis. Specifically trimethylates 'Lys-9' of histone H3 (H3K9me3). H3K9me3 is a specific tag for epigenetic transcriptional repression that recruits HP1 (CBX1, CBX3 and/or CBX5) proteins to methylated histones. Contributes to H3K9me3 in both the interspersed repetitive elements and centromere-associated repeats. Plays a role in chromosome condensation and segregation during mitosis. The chain is Histone-lysine N-methyltransferase SETDB2 (setdb2) from Xenopus laevis (African clawed frog).